The primary structure comprises 351 residues: Transcriptional activator POG1 (351 aa).

The segment covering 1–26 (MKQEPHRQSEEKEKPKGPMAVEREQH) has biased composition (basic and acidic residues). A disordered region spans residues 1–56 (MKQEPHRQSEEKEKPKGPMAVEREQHTSLSSGTTVTASTGDESTNSRPVESSQTEK). Positions 27-56 (TSLSSGTTVTASTGDESTNSRPVESSQTEK) are enriched in polar residues. Phosphoserine occurs at positions 152 and 168. 2 disordered regions span residues 234–256 (PGMG…TPVM) and 291–351 (QHQL…PPPT). Polar residues predominate over residues 241-256 (QLPTMSSNSESQTPVM). A Phosphoserine modification is found at serine 314.

The protein belongs to the POG1 family. Phosphorylated by CDC28.

The protein localises to the nucleus. Transcriptional activator which promotes cell cycle recovery with CLN2, after pheromone induced G1 arrest, probably inhibiting the ability of STE20 to activate the pheromone response pathway. Binds the promoters of genes that function in cell cycle regulation, cytoskeletal organization, and spindle assembly. May also be involved in stress-resistance. The polypeptide is Transcriptional activator POG1 (POG1) (Saccharomyces cerevisiae (strain ATCC 204508 / S288c) (Baker's yeast)).